Here is a 347-residue protein sequence, read N- to C-terminus: Methionine import ATP-binding protein MetN (347 aa).

Residues 2-247 (ITTTGLTKVY…PGSELASALF (246 aa)) form the ABC transporter domain. 38–45 (GQSGAGKS) is an ATP binding site.

This sequence belongs to the ABC transporter superfamily. Methionine importer (TC 3.A.1.24) family. The complex is composed of two ATP-binding proteins (MetN), two transmembrane proteins (MetI) and a solute-binding protein (MetQ).

Its subcellular location is the cell membrane. The enzyme catalyses L-methionine(out) + ATP + H2O = L-methionine(in) + ADP + phosphate + H(+). It carries out the reaction D-methionine(out) + ATP + H2O = D-methionine(in) + ADP + phosphate + H(+). Its function is as follows. Part of the ABC transporter complex MetNIQ involved in methionine import. Responsible for energy coupling to the transport system. This Streptomyces avermitilis (strain ATCC 31267 / DSM 46492 / JCM 5070 / NBRC 14893 / NCIMB 12804 / NRRL 8165 / MA-4680) protein is Methionine import ATP-binding protein MetN.